The sequence spans 384 residues: MSWQEKINAALDARRAADALRRRYPVAQGAGRWLVADDRQYLNFSSNDYLGLSHHPQIIRAWQQGAEQFGIGSGGSGHVSGYSVVHQALEEELAEWLGYSRALLFISGFAANQAVIAAMMAKEDRIAADRLSHASLLEAASLSPSQLRRFAHNDVTHLARLLASPCPGQQMVVTEGVFSMDGDSAPLAEIQQVTQQHNGWLMVDDAHGTGVIGEQGRGSCWLQKVKPELLVVTFGKGFGVSGAAVLCSSTVADYLLQFARHLIYSTSMPPAQAQALRASLAVIRSDEGDARREKLAALITRFRAGVQDLPFTLADSCSAIQPLIVGDNSRALQLAEKLRQQGCWVTAIRPPTVPAGTARLRLTLTAAHEMQDIDRLLEVLHGNG.

Arg21 is a substrate binding site. Gly108 to Phe109 serves as a coordination point for pyridoxal 5'-phosphate. Substrate is bound at residue His133. Residues Ser179, His207, and Thr233 each contribute to the pyridoxal 5'-phosphate site. Lys236 is modified (N6-(pyridoxal phosphate)lysine). Thr352 lines the substrate pocket.

Belongs to the class-II pyridoxal-phosphate-dependent aminotransferase family. BioF subfamily. Homodimer. Requires pyridoxal 5'-phosphate as cofactor.

The enzyme catalyses 6-carboxyhexanoyl-[ACP] + L-alanine + H(+) = (8S)-8-amino-7-oxononanoate + holo-[ACP] + CO2. The protein operates within cofactor biosynthesis; biotin biosynthesis. Its function is as follows. Catalyzes the decarboxylative condensation of pimeloyl-[acyl-carrier protein] and L-alanine to produce 8-amino-7-oxononanoate (AON), [acyl-carrier protein], and carbon dioxide. The protein is 8-amino-7-oxononanoate synthase of Escherichia coli (strain K12 / DH10B).